The following is a 203-amino-acid chain: Peptide deformylase (203 aa).

Positions 121 and 163 each coordinate Fe cation. Glu164 is an active-site residue. His167 is a Fe cation binding site.

It belongs to the polypeptide deformylase family. It depends on Fe(2+) as a cofactor.

It catalyses the reaction N-terminal N-formyl-L-methionyl-[peptide] + H2O = N-terminal L-methionyl-[peptide] + formate. Removes the formyl group from the N-terminal Met of newly synthesized proteins. Requires at least a dipeptide for an efficient rate of reaction. N-terminal L-methionine is a prerequisite for activity but the enzyme has broad specificity at other positions. The polypeptide is Peptide deformylase (Prochlorococcus marinus (strain MIT 9515)).